A 298-amino-acid chain; its full sequence is uncharacterized protein (298 aa).

The next 10 helical transmembrane spans lie at 9-28 (GYVL…LYFK), 38-60 (IIVQ…WKHP), 72-94 (RFVV…VWAV), 104-121 (LGYY…MLLL), 128-145 (LQWL…QQVW), 150-167 (LPWV…YGLI), 174-196 (AALP…WLLF), 211-233 (PEAL…FNAA), 240-262 (ATLG…LLFG), and 272-291 (AFAF…WRSL). Positions 18-141 (VIWGLFPLYF…AVALASLGVA (124 aa)) constitute an EamA domain.

This sequence belongs to the EamA transporter family.

It is found in the cell membrane. This is an uncharacterized protein from Pseudomonas aeruginosa (strain ATCC 15692 / DSM 22644 / CIP 104116 / JCM 14847 / LMG 12228 / 1C / PRS 101 / PAO1).